A 100-amino-acid polypeptide reads, in one-letter code: Urease subunit gamma (100 aa).

The protein belongs to the urease gamma subunit family. As to quaternary structure, heterotrimer of UreA (gamma), UreB (beta) and UreC (alpha) subunits. Three heterotrimers associate to form the active enzyme.

It localises to the cytoplasm. It carries out the reaction urea + 2 H2O + H(+) = hydrogencarbonate + 2 NH4(+). Its pathway is nitrogen metabolism; urea degradation; CO(2) and NH(3) from urea (urease route): step 1/1. The protein is Urease subunit gamma of Staphylococcus saprophyticus subsp. saprophyticus (strain ATCC 15305 / DSM 20229 / NCIMB 8711 / NCTC 7292 / S-41).